The primary structure comprises 155 residues: Protein E6 (155 aa).

2 zinc fingers span residues 39–75 (CNFC…CRCC) and 112–148 (CQNC…CRLC).

Belongs to the papillomaviridae E6 protein family. As to quaternary structure, forms homodimers. Interacts with ubiquitin-protein ligase UBE3A/E6-AP; this interaction stimulates UBE3A ubiquitin activity. Interacts with host BAK1.

It is found in the host cytoplasm. The protein localises to the host nucleus. In terms of biological role, plays a major role in the induction and maintenance of cellular transformation. E6 associates with host UBE3A/E6-AP ubiquitin-protein ligase and modulates its activity. Protects host keratinocytes from apoptosis by mediating the degradation of host BAK1. May also inhibit host immune response. The sequence is that of Protein E6 from Homo sapiens (Human).